Consider the following 124-residue polypeptide: Small ribosomal subunit protein uS12 (124 aa).

Asp89 is subject to 3-methylthioaspartic acid.

Belongs to the universal ribosomal protein uS12 family. In terms of assembly, part of the 30S ribosomal subunit. Contacts proteins S8 and S17. May interact with IF1 in the 30S initiation complex.

Functionally, with S4 and S5 plays an important role in translational accuracy. Interacts with and stabilizes bases of the 16S rRNA that are involved in tRNA selection in the A site and with the mRNA backbone. Located at the interface of the 30S and 50S subunits, it traverses the body of the 30S subunit contacting proteins on the other side and probably holding the rRNA structure together. The combined cluster of proteins S8, S12 and S17 appears to hold together the shoulder and platform of the 30S subunit. This is Small ribosomal subunit protein uS12 from Blochmanniella pennsylvanica (strain BPEN).